The sequence spans 109 residues: Nucleoid-associated protein VS_0917 (109 aa).

Disordered stretches follow at residues 1–22 and 88–109; these read MFGK…ERMQ and QKEK…KMPF. Residues 9 to 18 are compositionally biased toward low complexity; the sequence is NMMKQAQQMQ.

The protein belongs to the YbaB/EbfC family. In terms of assembly, homodimer.

The protein localises to the cytoplasm. Its subcellular location is the nucleoid. Binds to DNA and alters its conformation. May be involved in regulation of gene expression, nucleoid organization and DNA protection. The sequence is that of Nucleoid-associated protein VS_0917 from Vibrio atlanticus (strain LGP32) (Vibrio splendidus (strain Mel32)).